A 263-amino-acid polypeptide reads, in one-letter code: Palmitoyltransferase ZDHHC22 (263 aa).

The Cytoplasmic portion of the chain corresponds to 1–9; it reads MLALRLLNV. A helical transmembrane segment spans residues 10-30; it reads VAPAYFLCISLVTFVLQLFLF. The Lumenal segment spans residues 31-48; that stretch reads LPSMREDPTATPLFSPAV. Residues 49 to 69 form a helical membrane-spanning segment; the sequence is LHGALFLFLSANALGNYVLVI. Residues 70-125 are Cytoplasmic-facing; sequence QNSPDDLGTCQGTMSQRPQCPPPSTHFCRVCSRVTLRHDHHCFFTGNCIGSRNMRN. In terms of domain architecture, DHHC spans 91 to 131; that stretch reads PPSTHFCRVCSRVTLRHDHHCFFTGNCIGSRNMRNFILFCL. C111 serves as the catalytic S-palmitoyl cysteine intermediate. 2 consecutive transmembrane segments (helical) span residues 126-146 and 147-167; these read FILF…AGVA and YISA…TLLP. Residues 168-182 lie on the Cytoplasmic side of the membrane; that stretch reads TSISQFFSGAVLGSD. The chain crosses the membrane as a helical span at residues 183–203; that stretch reads MFVILMLYLWFAVGLACAGFC. Topologically, residues 204–263 are lumenal; the sequence is CHQLLLILRGQTRYQVRKGMAVRARPWRKNLQEVFGKRWLLGLLVPMFNVGTESSKQQDK.

This sequence belongs to the DHHC palmitoyltransferase family. In terms of assembly, interacts with CNN3.

It localises to the endoplasmic reticulum membrane. The protein localises to the golgi apparatus membrane. It catalyses the reaction L-cysteinyl-[protein] + hexadecanoyl-CoA = S-hexadecanoyl-L-cysteinyl-[protein] + CoA. Its function is as follows. Palmitoyltransferase that could catalyze the addition of palmitate onto various protein substrates and be involved in a variety of cellular processes. Catalyzes the palmitoylation of KCNMA1, regulating localization of KCNMA1 to the plasma membrane. Might also mediate palmitoylation of CNN3. The sequence is that of Palmitoyltransferase ZDHHC22 from Mus musculus (Mouse).